The primary structure comprises 243 residues: 1-(5-phosphoribosyl)-5-[(5-phosphoribosylamino)methylideneamino] imidazole-4-carboxamide isomerase (243 aa).

The active-site Proton acceptor is Asp8. Asp130 serves as the catalytic Proton donor.

Belongs to the HisA/HisF family.

It localises to the cytoplasm. The catalysed reaction is 1-(5-phospho-beta-D-ribosyl)-5-[(5-phospho-beta-D-ribosylamino)methylideneamino]imidazole-4-carboxamide = 5-[(5-phospho-1-deoxy-D-ribulos-1-ylimino)methylamino]-1-(5-phospho-beta-D-ribosyl)imidazole-4-carboxamide. Its pathway is amino-acid biosynthesis; L-histidine biosynthesis; L-histidine from 5-phospho-alpha-D-ribose 1-diphosphate: step 4/9. The chain is 1-(5-phosphoribosyl)-5-[(5-phosphoribosylamino)methylideneamino] imidazole-4-carboxamide isomerase from Saccharophagus degradans (strain 2-40 / ATCC 43961 / DSM 17024).